The primary structure comprises 818 residues: Hillarin (818 aa).

Positions 9 to 76 (STCLRCSETV…SSHVPKSGPG (68 aa)) constitute an LIM zinc-binding domain. Positions 97–141 (FVNEQIRGTRSEVDGGPLGGSRQSTPNGYGSREISSPSQNDSDYK) are disordered. Positions 117–137 (SRQSTPNGYGSREISSPSQND) are enriched in polar residues. Positions 216–272 (QDEWERELQRLTHKFEKELATSRRSRDEANILTMRHEQQKEDLEKNMTLRRSKKKES) form a coiled coil.

It belongs to the transglutaminase-like superfamily. As to quaternary structure, interacts with pnut. As to expression, localizes to the neuropil of the embryonic central nervous system (at protein level). Also detected in third instar larval brain (at protein level).

Its subcellular location is the cytoplasm. The protein resides in the cell cortex. It is found in the cleavage furrow. In terms of biological role, may act as a modulator of septin function during cytokinesis in the developing nervous system. This Drosophila melanogaster (Fruit fly) protein is Hillarin.